We begin with the raw amino-acid sequence, 758 residues long: POU domain, class 2, transcription factor 1 (758 aa).

Composition is skewed to polar residues over residues 1 to 10 (MKLHSSSKIQ), 19 to 30 (RMNNPSETSKSP), and 275 to 285 (VQQLPQSQTTP). 5 disordered regions span residues 1–43 (MKLH…QTNG), 271–296 (AATPVQQLPQSQTTPKRIDTPSLEEP), 377–398 (TNQSVLNSPGHGMEGLNRRRKK), 450–472 (EKRINPPSSGGSSSSPIKSLFSS), and 534–573 (SVLTSPSLSSSPSATAASSEASTAGETSTTQTTSTPMTSS). Residues 294-368 (EEPSDLEELE…LLEKWLNDAE (75 aa)) form the POU-specific domain. A DNA-binding region (homeobox) is located at residues 395 to 454 (RRKKRTSIETNIRVALEKSFLENQKPTSEEITMIADQLNMEKEVIRVWFCNRRQKEKRIN). The span at 455–472 (PPSSGGSSSSPIKSLFSS) shows a compositional bias: low complexity.

Belongs to the POU transcription factor family. Class-2 subfamily. Expressed in oocytes (at protein level). Expressed in the tadpole brain (at protein level).

It is found in the cytoplasm. Its subcellular location is the nucleus. Its function is as follows. Transcription factor that binds to the octamer motif (5'-ATTTGCAT-3') and activates the promoters of the genes of some small nuclear RNAs (snRNA) and histone H2B. In vitro does not bind to variant octamer sequences, such as the H2B octamer 5'-GTTTGCAT-3', although binding has been observed in vivo during early embryogenesis, suggesting that interactions between pou2f1 and other factors might be required for octamer-dependent H2B transcription. Acts downstream of Notch signaling during radial glia formation. May be important for gastrulation, possibly through the regulation of an FGF-type signaling pathway. The polypeptide is POU domain, class 2, transcription factor 1 (pou2f1) (Xenopus laevis (African clawed frog)).